The following is a 258-amino-acid chain: Large ribosomal subunit protein bL21 (258 aa).

The span at K140 to K159 shows a compositional bias: basic and acidic residues. A disordered region spans residues K140 to A181.

Belongs to the bacterial ribosomal protein bL21 family. Part of the 50S ribosomal subunit. Contacts protein L20.

This protein binds to 23S rRNA in the presence of protein L20. This chain is Large ribosomal subunit protein bL21, found in Jannaschia sp. (strain CCS1).